The following is a 253-amino-acid chain: Phosphate import ATP-binding protein PstB (253 aa).

Positions 7–248 (IEVEDLNVYF…PRDKRTEDYI (242 aa)) constitute an ABC transporter domain. 39–46 (GPSGCGKS) lines the ATP pocket.

The protein belongs to the ABC transporter superfamily. Phosphate importer (TC 3.A.1.7) family. The complex is composed of two ATP-binding proteins (PstB), two transmembrane proteins (PstC and PstA) and a solute-binding protein (PstS).

The protein resides in the cell membrane. It catalyses the reaction phosphate(out) + ATP + H2O = ADP + 2 phosphate(in) + H(+). Part of the ABC transporter complex PstSACB involved in phosphate import. Responsible for energy coupling to the transport system. The chain is Phosphate import ATP-binding protein PstB from Methanothermobacter thermautotrophicus (strain ATCC 29096 / DSM 1053 / JCM 10044 / NBRC 100330 / Delta H) (Methanobacterium thermoautotrophicum).